The chain runs to 426 residues: Probable imidazolonepropionase (426 aa).

2 residues coordinate 4-imidazolone-5-propanoate: tyrosine 159 and histidine 192. Tyrosine 159 provides a ligand contact to N-formimidoyl-L-glutamate. Histidine 260 lines the Fe(3+) pocket. A Zn(2+)-binding site is contributed by histidine 260. Glutamate 263 contacts 4-imidazolone-5-propanoate. Aspartate 334 contacts Fe(3+). A Zn(2+)-binding site is contributed by aspartate 334. An N-formimidoyl-L-glutamate-binding site is contributed by asparagine 336.

The protein belongs to the metallo-dependent hydrolases superfamily. HutI family. Zn(2+) serves as cofactor. Requires Fe(3+) as cofactor.

The catalysed reaction is 4-imidazolone-5-propanoate + H2O = N-formimidoyl-L-glutamate. It functions in the pathway amino-acid degradation; L-histidine degradation into L-glutamate; N-formimidoyl-L-glutamate from L-histidine: step 3/3. The sequence is that of Probable imidazolonepropionase (AMDHD1) from Homo sapiens (Human).